The chain runs to 1123 residues: Rabphilin-1 (1123 aa).

Residues 1-17 (MTKSTKLRHCKQKKKKP) are compositionally biased toward basic residues. 2 disordered regions span residues 1–56 (MTKS…GSRS) and 88–140 (SAHN…PSTH). The span at 36–46 (DAATTTSTTDA) shows a compositional bias: low complexity. Residues 215–341 (KAQTGSITAA…KKSGAWFYKE (127 aa)) form the RabBD domain. An FYVE-type zinc finger spans residues 263 to 328 (GNGVTHCLLC…LCKICSEARE (66 aa)). Cysteine 269, cysteine 272, cysteine 288, cysteine 291, cysteine 296, cysteine 300, cysteine 320, and cysteine 323 together coordinate Zn(2+). Polar residues-rich tracts occupy residues 365–375 (PNASSAATPLS), 387–400 (TMPSTSSCQMTTPK), 410–428 (PGLQMNGGPTSPLPNGTRR), and 487–497 (ASSSDGESFVQ). Disordered stretches follow at residues 365-710 (PNAS…VGSA), 737-779 (TSRA…LRTS), and 796-818 (HIVSSEPTSSTTSNQNHTSVPIP). Residues 531 to 541 (SRREANMERFS) show a composition bias toward basic and acidic residues. Residues 563–574 (ESRPSTRSTSPR) are compositionally biased toward low complexity. Polar residues-rich tracts occupy residues 605-632 (VVQSDHSNPQQSGLTCSSSSLTPLQQQA) and 649-666 (PDRTTSRVAQSASGTSLV). Residues 742–753 (SPLAASSSFLSS) show a composition bias toward low complexity. The span at 756-768 (DDTKQKNRRRDGV) shows a compositional bias: basic and acidic residues. The span at 803–818 (TSSTTSNQNHTSVPIP) shows a compositional bias: low complexity. C2 domains are found at residues 844–967 (SLGS…NLYL) and 984–1103 (DRGK…RQWI). 10 residues coordinate Ca(2+): aspartate 875, aspartate 881, aspartate 936, aspartate 938, aspartate 943, aspartate 1015, aspartate 1021, aspartate 1075, aspartate 1077, and aspartate 1083.

It depends on Ca(2+) as a cofactor.

It is found in the synapse. In terms of biological role, rab-3 effector. The sequence is that of Rabphilin-1 (rbf-1) from Caenorhabditis elegans.